Here is a 176-residue protein sequence, read N- to C-terminus: uncharacterized protein (176 aa).

This is an uncharacterized protein from Aquifex aeolicus (strain VF5).